The chain runs to 260 residues: Imidazole glycerol phosphate synthase subunit HisF (260 aa).

Catalysis depends on residues Asp-12 and Asp-131.

It belongs to the HisA/HisF family. As to quaternary structure, heterodimer of HisH and HisF.

The protein resides in the cytoplasm. The catalysed reaction is 5-[(5-phospho-1-deoxy-D-ribulos-1-ylimino)methylamino]-1-(5-phospho-beta-D-ribosyl)imidazole-4-carboxamide + L-glutamine = D-erythro-1-(imidazol-4-yl)glycerol 3-phosphate + 5-amino-1-(5-phospho-beta-D-ribosyl)imidazole-4-carboxamide + L-glutamate + H(+). It functions in the pathway amino-acid biosynthesis; L-histidine biosynthesis; L-histidine from 5-phospho-alpha-D-ribose 1-diphosphate: step 5/9. Functionally, IGPS catalyzes the conversion of PRFAR and glutamine to IGP, AICAR and glutamate. The HisF subunit catalyzes the cyclization activity that produces IGP and AICAR from PRFAR using the ammonia provided by the HisH subunit. This Corynebacterium jeikeium (strain K411) protein is Imidazole glycerol phosphate synthase subunit HisF.